We begin with the raw amino-acid sequence, 102 residues long: Glutaredoxin-C13 (102 aa).

A Glutaredoxin domain is found at 1-101 (MDKVMRMSSE…PLIKPYQSIL (101 aa)). The cysteines at positions 21 and 24 are disulfide-linked.

It belongs to the glutaredoxin family. CC-type subfamily.

The protein resides in the cytoplasm. In terms of biological role, has a glutathione-disulfide oxidoreductase activity in the presence of NADPH and glutathione reductase. Reduces low molecular weight disulfides and proteins. This chain is Glutaredoxin-C13 (GRXC13), found in Arabidopsis thaliana (Mouse-ear cress).